Reading from the N-terminus, the 503-residue chain is Alpha-1B-glycoprotein (503 aa).

The N-terminal stretch at 1–21 is a signal peptide; it reads MSAWAALLLLWGLSLSPVTEQ. Ig-like V-type domains are found at residues 27–115, 117–204, 208–305, 307–405, and 406–501; these read PRPS…EVTG, EPLP…TVTI, DPPP…LVLS, GTLP…LRVD, and GPLP…LRVA. Cysteines 49 and 96 form a disulfide. Asparagine 137 and asparagine 182 each carry an N-linked (GlcNAc...) asparagine glycan. Cystine bridges form between cysteine 142–cysteine 185, cysteine 235–cysteine 282, cysteine 333–cysteine 382, and cysteine 431–cysteine 478. The N-linked (GlcNAc...) asparagine glycan is linked to asparagine 379.

As to quaternary structure, interacts with CRISP3. In terms of tissue distribution, plasma.

It is found in the secreted. This chain is Alpha-1B-glycoprotein, found in Bos taurus (Bovine).